The following is a 179-amino-acid chain: Disulfide bond formation protein B (179 aa).

Residues 1 to 14 (MLSYFKELSLRRPA) are Cytoplasmic-facing. Residues 15 to 31 (WLLLATLACTLEVTGLY) traverse the membrane as a helical segment. Topologically, residues 32–49 (FQHKLGLIPCVMCIYERV) are periplasmic. A disulfide bridge connects residues cysteine 41 and cysteine 44. The chain crosses the membrane as a helical span at residues 50-65 (ALTGLLIAGLIALIAP). Topologically, residues 66–72 (NFFLFRW) are cytoplasmic. A helical transmembrane segment spans residues 73–90 (LALVLWGFSAFKGLSLSI). The Periplasmic segment spans residues 91 to 146 (KHYDYQANPSPWNQCEFKPQFPQTIPLDEWFPNIFAAGTVNCSEKQWQMLGWGMPE). Residues cysteine 105 and cysteine 132 are joined by a disulfide bond. Residues 147–165 (WLIVAFSLFMLFFLIVFMS) form a helical membrane-spanning segment. Over 166-179 (QFKRAKPQYRSVFR) the chain is Cytoplasmic.

It belongs to the DsbB family.

Its subcellular location is the cell inner membrane. Its function is as follows. Required for disulfide bond formation in some periplasmic proteins. Acts by oxidizing the DsbA protein. In Haemophilus ducreyi (strain 35000HP / ATCC 700724), this protein is Disulfide bond formation protein B.